The chain runs to 246 residues: 1-(5-phosphoribosyl)-5-[(5-phosphoribosylamino)methylideneamino] imidazole-4-carboxamide isomerase (246 aa).

The active-site Proton acceptor is the Asp8. The active-site Proton donor is Asp131.

The protein belongs to the HisA/HisF family.

It localises to the cytoplasm. It catalyses the reaction 1-(5-phospho-beta-D-ribosyl)-5-[(5-phospho-beta-D-ribosylamino)methylideneamino]imidazole-4-carboxamide = 5-[(5-phospho-1-deoxy-D-ribulos-1-ylimino)methylamino]-1-(5-phospho-beta-D-ribosyl)imidazole-4-carboxamide. Its pathway is amino-acid biosynthesis; L-histidine biosynthesis; L-histidine from 5-phospho-alpha-D-ribose 1-diphosphate: step 4/9. The polypeptide is 1-(5-phosphoribosyl)-5-[(5-phosphoribosylamino)methylideneamino] imidazole-4-carboxamide isomerase (Albidiferax ferrireducens (strain ATCC BAA-621 / DSM 15236 / T118) (Rhodoferax ferrireducens)).